A 247-amino-acid chain; its full sequence is tRNA (guanine-N(7)-)-methyltransferase (247 aa).

Residues glycine 70, 93 to 94 (EI), 128 to 129 (NA), and leucine 148 contribute to the S-adenosyl-L-methionine site. Aspartate 151 is an active-site residue. 226-228 (SEE) provides a ligand contact to S-adenosyl-L-methionine.

It belongs to the class I-like SAM-binding methyltransferase superfamily. TrmB family.

The protein localises to the nucleus. It carries out the reaction guanosine(46) in tRNA + S-adenosyl-L-methionine = N(7)-methylguanosine(46) in tRNA + S-adenosyl-L-homocysteine. Its pathway is tRNA modification; N(7)-methylguanine-tRNA biosynthesis. Its function is as follows. Catalyzes the formation of N(7)-methylguanine at position 46 (m7G46) in tRNA. In Drosophila pseudoobscura pseudoobscura (Fruit fly), this protein is tRNA (guanine-N(7)-)-methyltransferase.